The chain runs to 1960 residues: MEESKNEATNRAHVLFDRFVQATTCKGTLKAFQELCDHLELKPKDHRSFYHKLKSKLNYWKAKALWAKLDKRGSHKDYKKGKVCTNTKCLIIGAGPCGLRTAIDLSLLGAKVVVIEKRDAFSRNNVLHLWPFTIHDLRGLGAKKFYGKFCAGAIDHISIRQLQLILLKVALILGIEIHVNVEFRGLVEPPEDQENERIGWRALVHPKTHPVSEYEFEVIIGGDGRRNTLEGFRRKEFRGKLAIAITANFINRNTTAEAKVEEISGVAFIFNQKFFQELREATGIDLENIVYYKDDTHYFVMTAKKQSLLDKGVILHDYADTELLLSRENVDQEALLSYAREAADFSTQQQLPSLDFAINHYGQPDVAMFDFTCMYASENAALVREHNGHQLLVALVGDSLLEPFWPMGTGIARGFLAAMDSAWMVRSWSLGTSPLEVLAERESIYRLLPQTTPENVSKNFSQYSIDPVTRYPNVNVNFLRPSQVRHLYDTGDTKDVHLEMENLVNSRTTPKLARNESVARSSKLLGWCQRQTDGYAGVNVTDLTMSWKSGLALCAIIHRYRPDLIDFDSLDEQNVEKNNQLAFDIAEKELGISPIMTGREMASVGEPDKLSMVMYLTQFYEMFKDSLPSRDASDLNAEERAVLIASTKSPISFLSKLGQTISRKRSPKDKKEKDLDGAGKRRKTSQSEEEDTPRGHRGARPTLVSTLTDRRMDVALGNQNKVKYMATQLLAKFEENAPPQSVGVRRQGSIKKEFPQNLGGSDTCYFCQKRVYVMERLSAEGKFFHRSCFKCEHCATTLRLSAYAYALEDGKFYCKPHYCYRLSGPAQRKRPAGVPLSGKEARGPLQDSPAADASGRPSTSASPAERSPGPSVNGLEEPSVAKRLRGTPERIELENYRLSVRQAEGLEEVPEETQAEHNLSSVLDTGTEEDAASSSSESEMEEEEPPLPTSDLGGVPWKEAVRIHALLRGKSEEELEASRSFGAGEEEEEDEEDEEEEEEEEDEEDEEEDEDESSEVGSPRRLQQLLNPADPLEIQADVHWTHIRESQEERAALAPKSPLPGVPFDEDDLERDVDSEPAEIKGEAAENGDAGDTGAELDDDQHWSDDVPSEANTELHLPAVGAELELRVSDGEEEPPPASVGHPERGPSRVSSPTRSPEEPTGLSSPARSPGAQSAHPPLAAVATGVRSPAESPLPEPSTPPAEPEAHPPIRSQPEARTPPSPASPQRPSPPTQLPICSQPQPSPEATVPSPTLSPIRSQPVPARTSTPLAPLPVKNQGVTKDTLGSSLPGDEALKRSDLVAEFWMKSAEIRRSLGLTPVHRSPGSELAFQSPPLKACPAEKAPQSEGLRLLKPPPVPRKLGLPAAEGAQPCPPTPVSPPDREPKGPREEHRDLSSSSGLGLQGSSSRTRTPGSQSFNTSDSTMLTPPSSPPPPPPDEEPATLHRKPALAGQLVASAPPPPAVCVRPPREPTQPPQEEARKSFVESVDEIPFADDVEDTYDDNTCDDRTEDSSLQETFFTPPSHWPHPKQPLAPENGRGPESAVPLQKRGLPLVSAEAKELAAERMRAREKSVRSQALRDAMARQLSRMKEMDIAAAAPRTPRTPAPRRATAVPPKGPEEPAPRHEATSEELLSPPSDSGGPDGSVTSSEGSSGKSKKRSSLFSPRRSKKEKKPKGEGRPLERPSPGTLEEAAAKPRSLWKSVFSGYRKDKKKSDGRSCPSTPSSGTTVDAGKPRASPVSRAELRTRRQLSCSEDSDLSSDDVLERTSQKSRKEPRTYTEEELNAKLTRRVQKAARRQAKQEELKRLHRAQIIQRQLEQVEEKQRQLEERGVAVEKALRGEAGMGKKDDPKLMQEWFKLVQEKNAMVRYESELMIFARELELEDRQSRLQQELRERMAVEDHLKTEEELAEEKRILNEMLEVVEQRDALVALLEEQRLREKEEDKDLEAAMLSKGFSLHWS.

Residues 2-494 form a monooxygenase domain region; that stretch reads EESKNEATNR…RHLYDTGDTK (493 aa). FAD is bound by residues Cys-97, 116 to 118, 123 to 125, Phe-183, Tyr-298, and Asp-398; these read EKR and RNN. Residues 518–624 form the Calponin-homology (CH) domain; the sequence is VARSSKLLGW…YLTQFYEMFK (107 aa). Residue Ser-649 is modified to Phosphoserine. The tract at residues 658–704 is disordered; the sequence is GQTISRKRSPKDKKEKDLDGAGKRRKTSQSEEEDTPRGHRGARPTLV. The segment covering 669–679 has biased composition (basic and acidic residues); it reads DKKEKDLDGAG. Ser-685 and Ser-687 each carry phosphoserine. Residues 762-824 enclose the LIM zinc-binding domain; sequence DTCYFCQKRV…KPHYCYRLSG (63 aa). Zn(2+) is bound by residues Cys-764, Cys-767, His-785, Cys-788, Cys-791, Cys-794, Cys-814, and His-817. Disordered stretches follow at residues 826-887 and 906-1295; these read AQRK…LRGT and LEEV…EALK. Phosphothreonine is present on Thr-887. At Ser-971 the chain carries Phosphoserine. Residues 984 to 1014 are compositionally biased toward acidic residues; it reads GEEEEEDEEDEEEEEEEEDEEDEEEDEDESS. Composition is skewed to basic and acidic residues over residues 1039–1051 and 1072–1084; these read HWTH…EERA and DVDS…KGEA. Residues Ser-1129, Ser-1139, Ser-1156, and Ser-1188 each carry the phosphoserine modification. Pro residues-rich tracts occupy residues 1192 to 1203 and 1217 to 1233; these read SPLPEPSTPPAE and RTPP…PPTQ. Phosphoserine is present on Ser-1250. Thr-1252 is modified (phosphothreonine). Residues Ser-1254, Ser-1286, and Ser-1313 each carry the phosphoserine modification. Polar residues predominate over residues 1277-1286; it reads QGVTKDTLGS. Disordered regions lie at residues 1316-1550 and 1564-1782; these read LTPV…KRGL and RMRA…EEEL. Thr-1317 carries the post-translational modification Phosphothreonine. Basic and acidic residues predominate over residues 1379 to 1393; sequence PDREPKGPREEHRDL. Residues 1394-1406 are compositionally biased toward low complexity; that stretch reads SSSSGLGLQGSSS. Phosphoserine is present on Ser-1404. Residues 1407–1425 are compositionally biased toward polar residues; that stretch reads RTRTPGSQSFNTSDSTMLT. Phosphothreonine is present on Thr-1425. The segment covering 1485–1503 has biased composition (acidic residues); it reads SVDEIPFADDVEDTYDDNT. The segment covering 1594–1611 has biased composition (low complexity); that stretch reads AAAAPRTPRTPAPRRATA. Residues 1616 to 1627 show a composition bias toward basic and acidic residues; sequence GPEEPAPRHEAT. Positions 1633-1653 are enriched in low complexity; sequence SPPSDSGGPDGSVTSSEGSSG. Positions 1654-1672 are enriched in basic residues; sequence KSKKRSSLFSPRRSKKEKK. A phosphoserine mark is found at Ser-1660 and Ser-1663. Residues 1718-1727 show a composition bias toward polar residues; that stretch reads CPSTPSSGTT. Positions 1762–1778 are enriched in basic and acidic residues; the sequence is VLERTSQKSRKEPRTYT. Residues 1779–1952 adopt a coiled-coil conformation; that stretch reads EEELNAKLTR…DKDLEAAMLS (174 aa). A bMERB domain is found at 1799-1948; the sequence is KQEELKRLHR…EKEEDKDLEA (150 aa). Residue Ser-1870 is modified to Phosphoserine.

This sequence belongs to the Mical family. In terms of assembly, interacts with RAB1B, RAB8A, RAB10, RAB13 and RAB15 (in their GTP-bound forms); binding to RAB1B is of low affinity compared to other Rab proteins; at least in case of RAB8A can bind 2 molecules of RAB8A simultaneously through a high and a low affinity binding site, respectively. Interacts with ERC1 and RAB8A; may bridge ERC1 with RAB8A. Interacts with KIF23 and ERC1; enhances the interaction between KIF23 and ERC1. Interacts with NINL. FAD is required as a cofactor.

The protein resides in the cytoplasm. Its subcellular location is the cell cortex. It localises to the cytoskeleton. It is found in the nucleus. The protein localises to the midbody. The protein resides in the spindle. Its subcellular location is the cilium basal body. It carries out the reaction L-methionyl-[F-actin] + NADPH + O2 + H(+) = L-methionyl-(R)-S-oxide-[F-actin] + NADP(+) + H2O. In terms of biological role, monooxygenase that promotes depolymerization of F-actin by mediating oxidation of specific methionine residues on actin to form methionine-sulfoxide, resulting in actin filament disassembly and preventing repolymerization. In the absence of actin, it also functions as a NADPH oxidase producing H(2)O(2). Seems to act as Rab effector protein and play a role in vesicle trafficking. Involved in exocytic vesicles tethering and fusion: the monooxygenase activity is required for this process and implicates RAB8A associated with exocytotic vesicles. Required for cytokinesis. Contributes to stabilization and/or maturation of the intercellular bridge independently of its monooxygenase activity. Promotes recruitment of Rab8 and ERC1 to the intercellular bridge, and together these proteins are proposed to function in timely abscission. In Bos taurus (Bovine), this protein is [F-actin]-monooxygenase MICAL3 (MICAL3).